We begin with the raw amino-acid sequence, 549 residues long: Probable protein kinase UbiB (549 aa).

Positions 123-501 constitute a Protein kinase domain; the sequence is DFNETPLASA…QQQAHKSNYL (379 aa). Residues 129 to 137 and Lys152 each bind ATP; that span reads LASASISQV. The active-site Proton acceptor is Asp287. The next 2 helical transmembrane spans lie at 498–518 and 520–540; these read SNYL…LFNQ and ATLL…IIGW.

This sequence belongs to the ABC1 family. UbiB subfamily.

The protein resides in the cell inner membrane. The protein operates within cofactor biosynthesis; ubiquinone biosynthesis [regulation]. In terms of biological role, is probably a protein kinase regulator of UbiI activity which is involved in aerobic coenzyme Q (ubiquinone) biosynthesis. This chain is Probable protein kinase UbiB, found in Shewanella oneidensis (strain ATCC 700550 / JCM 31522 / CIP 106686 / LMG 19005 / NCIMB 14063 / MR-1).